A 162-amino-acid polypeptide reads, in one-letter code: 6,7-dimethyl-8-ribityllumazine synthase (162 aa).

Residues Phe22, 56–58 (TFE), and 80–82 (AVI) contribute to the 5-amino-6-(D-ribitylamino)uracil site. 85–86 (GT) contacts (2S)-2-hydroxy-3-oxobutyl phosphate. Residue His88 is the Proton donor of the active site. Met113 is a binding site for 5-amino-6-(D-ribitylamino)uracil. Arg127 is a (2S)-2-hydroxy-3-oxobutyl phosphate binding site.

It belongs to the DMRL synthase family.

It carries out the reaction (2S)-2-hydroxy-3-oxobutyl phosphate + 5-amino-6-(D-ribitylamino)uracil = 6,7-dimethyl-8-(1-D-ribityl)lumazine + phosphate + 2 H2O + H(+). Its pathway is cofactor biosynthesis; riboflavin biosynthesis; riboflavin from 2-hydroxy-3-oxobutyl phosphate and 5-amino-6-(D-ribitylamino)uracil: step 1/2. Its function is as follows. Catalyzes the formation of 6,7-dimethyl-8-ribityllumazine by condensation of 5-amino-6-(D-ribitylamino)uracil with 3,4-dihydroxy-2-butanone 4-phosphate. This is the penultimate step in the biosynthesis of riboflavin. This is 6,7-dimethyl-8-ribityllumazine synthase from Anaeromyxobacter dehalogenans (strain 2CP-C).